The chain runs to 319 residues: Acetyl esterase (319 aa).

The Involved in the stabilization of the negatively charged intermediate by the formation of the oxyanion hole signature appears at His91–Gly93. Residues Ser165, Asp262, and His292 contribute to the active site.

This sequence belongs to the 'GDXG' lipolytic enzyme family. As to quaternary structure, homodimer. Interacts with MalT and MelA.

It is found in the cytoplasm. In terms of biological role, displays esterase activity towards short chain fatty esters (acyl chain length of up to 8 carbons). Able to hydrolyze triacetylglycerol (triacetin) and tributyrylglycerol (tributyrin), but not trioleylglycerol (triolein) or cholesterol oleate. Negatively regulates MalT activity by antagonizing maltotriose binding. Inhibits MelA galactosidase activity. In Shigella flexneri serotype 5b (strain 8401), this protein is Acetyl esterase.